The sequence spans 348 residues: Gamma-glutamyl hydrolase 1 (348 aa).

Residues 1–23 form the signal peptide; it reads MIDNNCLYKEELNRNSYSGLAKE. In terms of domain architecture, Gamma-glutamyl hydrolase spans 46–342; sequence SPDPNLNYRP…RGYDEVYIFT (297 aa). Catalysis depends on cysteine 156, which acts as the Nucleophile. Residue histidine 269 is part of the active site.

The protein belongs to the peptidase C26 family. As to expression, highly expressed in roots and at lower levels in leaves, stems and siliques.

It localises to the vacuole. The protein localises to the secreted. It is found in the extracellular space. Its subcellular location is the cell wall. The catalysed reaction is (6S)-5,6,7,8-tetrahydrofolyl-(gamma-L-Glu)(n) + (n-1) H2O = (6S)-5,6,7,8-tetrahydrofolate + (n-1) L-glutamate. Cleaves the polyglutamate sidechains of folate polyglutamates in the vacuole. Is important for polyglutamyl tail length determination before vacuolar exit. Plays a role in folate stability and intracellular folate content. The protein is Gamma-glutamyl hydrolase 1 (GGH1) of Arabidopsis thaliana (Mouse-ear cress).